Reading from the N-terminus, the 95-residue chain is MKDPRDILRKPVVTEKSTSLLQDNKYTFIVDPRANKTEIKEAVEKIFKVKVEKVNTMRVKGRIKRVRNIPGKTPDYKKAIVKLRQGDKIELFEGM.

The protein belongs to the universal ribosomal protein uL23 family. In terms of assembly, part of the 50S ribosomal subunit. Contacts protein L29, and trigger factor when it is bound to the ribosome.

In terms of biological role, one of the early assembly proteins it binds 23S rRNA. One of the proteins that surrounds the polypeptide exit tunnel on the outside of the ribosome. Forms the main docking site for trigger factor binding to the ribosome. The sequence is that of Large ribosomal subunit protein uL23 from Pelotomaculum thermopropionicum (strain DSM 13744 / JCM 10971 / SI).